The sequence spans 728 residues: Procollagen-lysine,2-oxoglutarate 5-dioxygenase 1 (728 aa).

The signal sequence occupies residues 1-18 (MRSLLLLASLAWLLLAQA). 3 N-linked (GlcNAc...) asparagine glycosylation sites follow: N177, N198, and N539. In terms of domain architecture, Fe2OG dioxygenase spans 637–728 (QFDLAFVVRY…RYIAVSFVDP (92 aa)). The Fe cation site is built by H657 and D659. N687 carries an N-linked (GlcNAc...) asparagine glycan. H709 lines the Fe cation pocket. The active site involves R719.

Homodimer. Identified in a complex with P3H3 and P3H4. The cofactor is Fe(2+). L-ascorbate is required as a cofactor.

The protein resides in the rough endoplasmic reticulum membrane. The enzyme catalyses L-lysyl-[collagen] + 2-oxoglutarate + O2 = (5R)-5-hydroxy-L-lysyl-[collagen] + succinate + CO2. Its function is as follows. Part of a complex composed of PLOD1, P3H3 and P3H4 that catalyzes hydroxylation of lysine residues in collagen alpha chains and is required for normal assembly and cross-linkling of collagen fibrils. Forms hydroxylysine residues in -Xaa-Lys-Gly- sequences in collagens. These hydroxylysines serve as sites of attachment for carbohydrate units and are essential for the stability of the intermolecular collagen cross-links. The chain is Procollagen-lysine,2-oxoglutarate 5-dioxygenase 1 (Plod1) from Rattus norvegicus (Rat).